The chain runs to 212 residues: ATP phosphoribosyltransferase (212 aa).

The protein belongs to the ATP phosphoribosyltransferase family. Short subfamily. In terms of assembly, heteromultimer composed of HisG and HisZ subunits.

It is found in the cytoplasm. It catalyses the reaction 1-(5-phospho-beta-D-ribosyl)-ATP + diphosphate = 5-phospho-alpha-D-ribose 1-diphosphate + ATP. It participates in amino-acid biosynthesis; L-histidine biosynthesis; L-histidine from 5-phospho-alpha-D-ribose 1-diphosphate: step 1/9. Catalyzes the condensation of ATP and 5-phosphoribose 1-diphosphate to form N'-(5'-phosphoribosyl)-ATP (PR-ATP). Has a crucial role in the pathway because the rate of histidine biosynthesis seems to be controlled primarily by regulation of HisG enzymatic activity. This is ATP phosphoribosyltransferase from Clostridium novyi (strain NT).